Here is a 115-residue protein sequence, read N- to C-terminus: Migration and invasion enhancer 1 (115 aa).

N-acetylserine is present on serine 2. Cysteine 30 and cysteine 33 are oxidised to a cystine. Cysteine 112 is lipidated: S-geranylgeranyl cysteine. Residues 113–115 (VIL) constitute a propeptide, removed in mature form.

It belongs to the SelWTH family. Interacts with GPX1. In terms of processing, isoprenylation facilitates association with the plasma membrane and enhances the migratory phenotype of cells by inducing increased filopodia formation. As to expression, widely expressed with highest levels in kidney followed by brain and testis.

It localises to the cytoplasm. The protein localises to the cytosol. Its subcellular location is the cell membrane. Functionally, increases cell migration by inducing filopodia formation at the leading edge of migrating cells. Plays a role in regulation of apoptosis, possibly through control of CASP3. May be involved in a redox-related process. This Mus musculus (Mouse) protein is Migration and invasion enhancer 1 (Mien1).